A 355-amino-acid chain; its full sequence is Uroporphyrinogen decarboxylase (355 aa).

Substrate is bound by residues 27–31 (RQAGR), aspartate 77, tyrosine 154, threonine 209, and histidine 328.

The protein belongs to the uroporphyrinogen decarboxylase family. Homodimer.

It localises to the cytoplasm. It carries out the reaction uroporphyrinogen III + 4 H(+) = coproporphyrinogen III + 4 CO2. The protein operates within porphyrin-containing compound metabolism; protoporphyrin-IX biosynthesis; coproporphyrinogen-III from 5-aminolevulinate: step 4/4. Catalyzes the decarboxylation of four acetate groups of uroporphyrinogen-III to yield coproporphyrinogen-III. The polypeptide is Uroporphyrinogen decarboxylase (Dechloromonas aromatica (strain RCB)).